We begin with the raw amino-acid sequence, 155 residues long: Cathelicidin-1 (155 aa).

The signal sequence occupies residues 1–29; that stretch reads METPRASLSLGRWSLWLLLLGLALPSASA. At Gln-30 the chain carries Pyrrolidone carboxylic acid. Residues 30-143 constitute a propeptide that is removed on maturation; sequence QALSYREAVL…KQPWAPPQAA (114 aa). Cystine bridges form between Cys-85/Cys-96, Cys-107/Cys-124, and Cys-146/Cys-154.

Belongs to the cathelicidin family. In terms of tissue distribution, large granules of neutrophils.

Its subcellular location is the secreted. Functionally, potent microbicidal activity; active against S.aureus and E.coli. In Bos taurus (Bovine), this protein is Cathelicidin-1 (CATHL1).